The primary structure comprises 166 residues: uncharacterized protein (166 aa).

The protein to B.subtilis YpjQ.

This is an uncharacterized protein from Bacillus subtilis (strain 168).